The sequence spans 284 residues: Zinc finger protein ZAT3 (284 aa).

Residues 1–12 (MNNNHSYDDRSF) are compositionally biased toward basic and acidic residues. The disordered stretch occupies residues 1–76 (MNNNHSYDDR…KPDPNAPKIT (76 aa)). Polar residues predominate over residues 18–37 (PSNTSNPNPNLQFALSSSYD). Over residues 47 to 62 (TVASSSSSSPKSASKP) the composition is skewed to low complexity. 3 consecutive C2H2-type zinc fingers follow at residues 77–99 (RPCT…MRCH), 162–184 (FECG…RASH), and 222–244 (HKCN…MRCH).

In terms of assembly, interacts (via the EAR motif) with TPL. Expressed exclusively in pollen.

The protein localises to the nucleus. Functionally, mediates the regulation of male germ cell division by DUO1. The chain is Zinc finger protein ZAT3 from Arabidopsis thaliana (Mouse-ear cress).